The primary structure comprises 762 residues: ATP-dependent RNA helicase SUV3 homolog, mitochondrial (762 aa).

Residues 1 to 36 (MQNTRRCISLICVTRQPPSLRATYGAVAAARCLHRA) constitute a mitochondrion transit peptide. One can recognise a Helicase ATP-binding domain in the interval 181-321 (NARALTRKIV…ALELLQKICE (141 aa)). 194–201 (GPTNSGKT) contacts ATP. One can recognise a Helicase C-terminal domain in the interval 331 to 508 (RYDRLTELTV…PTADQIELYA (178 aa)). The segment at 716 to 762 (EWDAQQVGQAAAASTSSKESQESPPDDSDDEDSYPGSYKKTRRKRRK) is disordered. Polar residues predominate over residues 721–730 (QVGQAAAAST). Acidic residues predominate over residues 739-748 (PPDDSDDEDS).

This sequence belongs to the helicase family. Mg(2+) serves as cofactor. Requires Mn(2+) as cofactor.

The protein resides in the mitochondrion. It catalyses the reaction ATP + H2O = ADP + phosphate + H(+). Major helicase player in mitochondrial RNA metabolism and maintenance. Likely component of the mitochondrial degradosome (mtEXO) complex, that degrades 3' overhang double-stranded RNA with a 3'-to-5' directionality in an ATP-dependent manner. ATPase and ATP-dependent multisubstrate helicase, able to unwind double-stranded (ds) DNA and RNA, and RNA/DNA heteroduplexes in the 5'-to-3' direction. Regulates mRNA stability and is required for the correct processing and maturation of mitochondrial transcripts. This is ATP-dependent RNA helicase SUV3 homolog, mitochondrial from Drosophila pseudoobscura pseudoobscura (Fruit fly).